Consider the following 305-residue polypeptide: UDP-3-O-acyl-N-acetylglucosamine deacetylase (305 aa).

3 residues coordinate Zn(2+): His79, His238, and Asp242. Catalysis depends on His265, which acts as the Proton donor.

This sequence belongs to the LpxC family. Zn(2+) serves as cofactor.

The enzyme catalyses a UDP-3-O-[(3R)-3-hydroxyacyl]-N-acetyl-alpha-D-glucosamine + H2O = a UDP-3-O-[(3R)-3-hydroxyacyl]-alpha-D-glucosamine + acetate. It participates in glycolipid biosynthesis; lipid IV(A) biosynthesis; lipid IV(A) from (3R)-3-hydroxytetradecanoyl-[acyl-carrier-protein] and UDP-N-acetyl-alpha-D-glucosamine: step 2/6. Functionally, catalyzes the hydrolysis of UDP-3-O-myristoyl-N-acetylglucosamine to form UDP-3-O-myristoylglucosamine and acetate, the committed step in lipid A biosynthesis. This chain is UDP-3-O-acyl-N-acetylglucosamine deacetylase, found in Sodalis glossinidius (strain morsitans).